We begin with the raw amino-acid sequence, 868 residues long: Leucine-rich repeat receptor-like serine/threonine-protein kinase At2g14510 (868 aa).

An N-terminal signal peptide occupies residues 1 to 23 (METRNKFMLLACATFSIMSLVKS). Topologically, residues 24–510 (QNQQGFISLD…KHQPKSWLVA (487 aa)) are extracellular. 8 N-linked (GlcNAc...) asparagine glycosylation sites follow: asparagine 48, asparagine 68, asparagine 231, asparagine 235, asparagine 258, asparagine 291, asparagine 433, and asparagine 446. LRR repeat units lie at residues 412–435 (RIIS…QNLT), 436–458 (MLRE…LATI), and 460–482 (PLLV…LQDR). Residue asparagine 495 is glycosylated (N-linked (GlcNAc...) asparagine). Residues 511-531 (IVASISCVAVTIIVLVLIFIF) traverse the membrane as a helical segment. Residues 532-868 (RRRKSSTRKV…TFISDIPSAR (337 aa)) are Cytoplasmic-facing. In terms of domain architecture, Protein kinase spans 563-832 (NNFEVVLGKG…NMTRVAHELN (270 aa)). ATP-binding positions include 569 to 577 (LGKGGFGVV) and lysine 590. Tyrosine 635 carries the post-translational modification Phosphotyrosine. Aspartate 687 acts as the Proton acceptor in catalysis. At serine 721 the chain carries Phosphoserine. Phosphothreonine is present on residues threonine 722 and threonine 727. Residue tyrosine 735 is modified to Phosphotyrosine.

The protein belongs to the protein kinase superfamily. Ser/Thr protein kinase family.

It is found in the cell membrane. It catalyses the reaction L-seryl-[protein] + ATP = O-phospho-L-seryl-[protein] + ADP + H(+). The enzyme catalyses L-threonyl-[protein] + ATP = O-phospho-L-threonyl-[protein] + ADP + H(+). This is Leucine-rich repeat receptor-like serine/threonine-protein kinase At2g14510 from Arabidopsis thaliana (Mouse-ear cress).